A 40-amino-acid polypeptide reads, in one-letter code: Snaclec tokaracetin subunit beta (40 aa).

Cys-2 and Cys-13 are disulfide-bonded. One can recognise a C-type lectin domain in the interval 9–40; it reads YDEHCYRVFQQKMNWEDAEKFCTQQHKGXHLX.

Belongs to the snaclec family. As to quaternary structure, heterodimer of subunits alpha and beta; disulfide-linked. As to expression, expressed by the venom gland.

The protein localises to the secreted. Functionally, platelet antagonist that specifically and reversibly binds to a site on platelet glycoprotein Ibalpha (GP1BA) close to or identical with the site for vWF binding. It inhibits the binding of vWF to platelets and vWF-dependent shear-induced platelet aggregation. This is Snaclec tokaracetin subunit beta from Protobothrops tokarensis (Tokara habu).